The primary structure comprises 221 residues: Ribosomal RNA small subunit methyltransferase G (221 aa).

Residues G90, L95, 141-142 (VE), and R154 contribute to the S-adenosyl-L-methionine site.

This sequence belongs to the methyltransferase superfamily. RNA methyltransferase RsmG family.

It is found in the cytoplasm. It catalyses the reaction guanosine(527) in 16S rRNA + S-adenosyl-L-methionine = N(7)-methylguanosine(527) in 16S rRNA + S-adenosyl-L-homocysteine. Functionally, specifically methylates the N7 position of guanine in position 527 of 16S rRNA. This Polaromonas naphthalenivorans (strain CJ2) protein is Ribosomal RNA small subunit methyltransferase G.